The primary structure comprises 340 residues: MSAPIIAIDAMGGDFGPRNIVQASLACLTATPSLHLVLVGQASLIEELIARHGAVDRSRLRVVNANEAIAMDERPSQALRGKPDSSMRVALELVASGQAQACVSAGNTGALMALSRFVLKTLPGIDRPAMIAAIPTRSGHCQMLDLGANVDCSAEALYQFAVMGSVLAETLGVKKPRVALLNVGTEDIKGNQQVKLAAGLLQAAQGLNYIGYIEGDGLYRGEADVVVCDGFVGNVLLKSSEGLASMIAARIDTLFNRNLLSRAVGALALPLLKRLQTDLAPARHNGASLLGLQGIVVKSHGSASVSGFQSAIQRAIVESRENLPQRLKGRLELLLQNGQT.

Belongs to the PlsX family. As to quaternary structure, homodimer. Probably interacts with PlsY.

It localises to the cytoplasm. The enzyme catalyses a fatty acyl-[ACP] + phosphate = an acyl phosphate + holo-[ACP]. The protein operates within lipid metabolism; phospholipid metabolism. Functionally, catalyzes the reversible formation of acyl-phosphate (acyl-PO(4)) from acyl-[acyl-carrier-protein] (acyl-ACP). This enzyme utilizes acyl-ACP as fatty acyl donor, but not acyl-CoA. In Pseudomonas savastanoi pv. phaseolicola (strain 1448A / Race 6) (Pseudomonas syringae pv. phaseolicola (strain 1448A / Race 6)), this protein is Phosphate acyltransferase.